A 427-amino-acid polypeptide reads, in one-letter code: Glutamate-1-semialdehyde 2,1-aminomutase (427 aa).

K265 is modified (N6-(pyridoxal phosphate)lysine).

This sequence belongs to the class-III pyridoxal-phosphate-dependent aminotransferase family. HemL subfamily. In terms of assembly, homodimer. The cofactor is pyridoxal 5'-phosphate.

Its subcellular location is the cytoplasm. The catalysed reaction is (S)-4-amino-5-oxopentanoate = 5-aminolevulinate. The protein operates within porphyrin-containing compound metabolism; protoporphyrin-IX biosynthesis; 5-aminolevulinate from L-glutamyl-tRNA(Glu): step 2/2. The sequence is that of Glutamate-1-semialdehyde 2,1-aminomutase from Pseudomonas putida (strain GB-1).